We begin with the raw amino-acid sequence, 347 residues long: Integrin beta-1-binding protein 2 (347 aa).

Zn(2+) contacts are provided by Cys-5, Cys-10, Cys-24, and His-27. A CHORD 1 domain is found at 5–64 (CRNKGCGQHFDPNTNLPDSCCHHPGVPIFHDALKGWSCCRKRTVDFSEFLNIKGCTMGPH). Positions 28–31 (PGVP) match the SH3-binding motif. Positions 42, 43, 59, and 64 each coordinate Zn(2+). The short motif at 70–78 (PEAPQPEGP) is the SH3-binding element. The Zn(2+) site is built by Cys-149 and Cys-154. The 60-residue stretch at 149 to 208 (CQNPGCDAVYQGPESDATPCTYHPGAPRFHEGMKSWSCCGIQTLDFGAFLAQPGCRVGRH) folds into the CHORD 2 domain. An SH2-binding motif is present at residues 158 to 161 (YQGP). 2 residues coordinate Zn(2+): Cys-168 and His-171. The short motif at 172–175 (PGAP) is the SH3-binding element. The Zn(2+) site is built by Cys-186, Cys-187, Cys-203, and His-208. In terms of domain architecture, CS spans 215-304 (PASCRHDWHQ…ADPGSWAQLE (90 aa)). Residues 234–237 (YGQI) carry the SH2-binding motif. The disordered stretch occupies residues 319-347 (LEMDEEESDDSDDDLSWTEEEEEEEAMGE). Positions 320–347 (EMDEEESDDSDDDLSWTEEEEEEEAMGE) are enriched in acidic residues.

Interacts with beta-1 integrin subunit. This interaction is regulated by divalent cations, and it occurs only in absence of calcium. As to expression, expressed in skeletal and cardiac muscles but not in other tissues.

Its function is as follows. May play a role during maturation and/or organization of muscles cells. This is Integrin beta-1-binding protein 2 (ITGB1BP2) from Homo sapiens (Human).